The sequence spans 375 residues: Aminomethyltransferase (375 aa).

Belongs to the GcvT family. As to quaternary structure, the glycine cleavage system is composed of four proteins: P, T, L and H.

The catalysed reaction is N(6)-[(R)-S(8)-aminomethyldihydrolipoyl]-L-lysyl-[protein] + (6S)-5,6,7,8-tetrahydrofolate = N(6)-[(R)-dihydrolipoyl]-L-lysyl-[protein] + (6R)-5,10-methylene-5,6,7,8-tetrahydrofolate + NH4(+). The glycine cleavage system catalyzes the degradation of glycine. This chain is Aminomethyltransferase, found in Cupriavidus metallidurans (strain ATCC 43123 / DSM 2839 / NBRC 102507 / CH34) (Ralstonia metallidurans).